The chain runs to 302 residues: MHDPGEHGHGRHDHDHDHDHVHDHDHDHDHVHGGGHRHAHEHEHAHEHAHGHEHGHAHAHAHAHAHEHAHGHTHEHWAHPGLFSERDAPKDRDFSARAFTVGIGGPVGSGKTALVLALCRALRDRMPLGVVTNDIFTQEDAEFLHRNKALPPERIRAVETGGCPHAAIREDISHNLVALDDLMDHVAPALLIVESGGDNLAAQYSRELVDYTIYVIDVAGGDKVPRKGGPGITQSDLLVINKTDLAPHVGADLGVMERDARRMRGDGPFLFAQCNRSQGVPEIIDHILSAMRRATTTAPPAK.

3 stretches are compositionally biased toward basic and acidic residues: residues 1 to 32 (MHDP…DHVH), 40 to 56 (HEHE…EHGH), and 64 to 76 (HAHE…THEH). The disordered stretch occupies residues 1–76 (MHDPGEHGHG…EHAHGHTHEH (76 aa)). 105-112 (GPVGSGKT) is a binding site for GTP.

The protein belongs to the SIMIBI class G3E GTPase family. UreG subfamily. Homodimer. UreD, UreF and UreG form a complex that acts as a GTP-hydrolysis-dependent molecular chaperone, activating the urease apoprotein by helping to assemble the nickel containing metallocenter of UreC. The UreE protein probably delivers the nickel.

The protein localises to the cytoplasm. Facilitates the functional incorporation of the urease nickel metallocenter. This process requires GTP hydrolysis, probably effectuated by UreG. The chain is Urease accessory protein UreG from Sorangium cellulosum (strain So ce56) (Polyangium cellulosum (strain So ce56)).